A 355-amino-acid chain; its full sequence is Galectin-9 (355 aa).

Galectin domains follow at residues 17–148 (FSGT…ISFQ) and 227–355 (FITT…HVQT). Residues N48, H61, R65, N75, 82–88 (WGPEERK), H267, R271, T281, and 287–293 (WGSEERS) each bind a beta-D-galactoside.

Monomer. In terms of tissue distribution, peripheral blood leukocytes and lymphatic tissues. Expressed in lung, liver, breast and kidney with higher levels in tumor endothelial cells than normal endothelium (at protein level). Expressed in trophoblast cells in decidua and placenta in pregnancy (at protein level). Isoform 2 is the most abundant isoform expressed in endothelial cells. Upon endothelial cell activation isoform 2 expression decreases while expression of isoform 3 and isoform 5 increases. Isoform 4 decreases in pathological pregnancy.

It localises to the cytoplasm. The protein resides in the nucleus. The protein localises to the secreted. In terms of biological role, binds galactosides. Has high affinity for the Forssman pentasaccharide. Ligand for HAVCR2/TIM3. Binding to HAVCR2 induces T-helper type 1 lymphocyte (Th1) death. Also stimulates bactericidal activity in infected macrophages by causing macrophage activation and IL1B secretion which restricts intracellular bacterial growth. Ligand for P4HB; the interaction retains P4HB at the cell surface of Th2 T-helper cells, increasing disulfide reductase activity at the plasma membrane, altering the plasma membrane redox state and enhancing cell migration. Ligand for CD44; the interaction enhances binding of SMAD3 to the FOXP3 promoter, leading to up-regulation of FOXP3 expression and increased induced regulatory T (iTreg) cell stability and suppressive function. Promotes ability of mesenchymal stromal cells to suppress T-cell proliferation. Expands regulatory T-cells and induces cytotoxic T-cell apoptosis following virus infection. Activates ERK1/2 phosphorylation inducing cytokine (IL-6, IL-8, IL-12) and chemokine (CCL2) production in mast and dendritic cells. Inhibits degranulation and induces apoptosis of mast cells. Induces maturation and migration of dendritic cells. Inhibits natural killer (NK) cell function. Can transform NK cell phenotype from peripheral to decidual during pregnancy. Astrocyte derived galectin-9 enhances microglial TNF production. May play a role in thymocyte-epithelial interactions relevant to the biology of the thymus. May provide the molecular basis for urate flux across cell membranes, allowing urate that is formed during purine metabolism to efflux from cells and serving as an electrogenic transporter that plays an important role in renal and gastrointestinal urate excretion. Highly selective to the anion urate. Acts as an eosinophil chemoattractant. It also inhibits angiogenesis. Suppresses IFNG production by natural killer cells. The protein is Galectin-9 (LGALS9) of Homo sapiens (Human).